The primary structure comprises 256 residues: Reaction center protein M chain (256 aa).

A run of 3 helical transmembrane segments spans residues 52–78 (PGVA…LASV), 110–139 (EGGW…ARAL), and 142–167 (GTHM…PLLL). (7R,8Z)-bacteriochlorophyll b-binding residues include histidine 181 and histidine 201. The helical transmembrane segment at 197–225 (YNPFHMLSIAFLYGSAVLFAMHGATILAV) threads the bilayer. Histidine 218 and glutamate 233 together coordinate Fe cation. A ubiquinone is bound at residue tryptophan 251.

This sequence belongs to the reaction center PufL/M/PsbA/D family. As to quaternary structure, reaction center is composed of four bacteriochlorophylls, two bacteriopheophytins, two ubiquinones, one iron, and two highly hydrophobic polypeptide chains (designated L and M).

The protein localises to the cellular chromatophore membrane. In terms of biological role, the reaction center is a membrane-bound complex that mediates the initial photochemical event in the electron transfer process of photosynthesis. This is Reaction center protein M chain (pufM) from Pararhodospirillum photometricum (Rhodospirillum photometricum).